Here is a 151-residue protein sequence, read N- to C-terminus: D-aminoacyl-tRNA deacylase (151 aa).

A Gly-cisPro motif, important for rejection of L-amino acids motif is present at residues 139 to 140; it reads GP.

This sequence belongs to the DTD family. Homodimer.

Its subcellular location is the cytoplasm. It carries out the reaction glycyl-tRNA(Ala) + H2O = tRNA(Ala) + glycine + H(+). It catalyses the reaction a D-aminoacyl-tRNA + H2O = a tRNA + a D-alpha-amino acid + H(+). An aminoacyl-tRNA editing enzyme that deacylates mischarged D-aminoacyl-tRNAs. Also deacylates mischarged glycyl-tRNA(Ala), protecting cells against glycine mischarging by AlaRS. Acts via tRNA-based rather than protein-based catalysis; rejects L-amino acids rather than detecting D-amino acids in the active site. By recycling D-aminoacyl-tRNA to D-amino acids and free tRNA molecules, this enzyme counteracts the toxicity associated with the formation of D-aminoacyl-tRNA entities in vivo and helps enforce protein L-homochirality. The chain is D-aminoacyl-tRNA deacylase from Symbiobacterium thermophilum (strain DSM 24528 / JCM 14929 / IAM 14863 / T).